The primary structure comprises 492 residues: Putative sucrose transport protein SUC6 (492 aa).

The disordered stretch occupies residues 1–26; the sequence is MSDLQANKDAAAVNRQSSSSSADLNG. Residues 1-33 are Cytoplasmic-facing; the sequence is MSDLQANKDAAAVNRQSSSSSADLNGPSPMRKM. The segment covering 14 to 23 has biased composition (polar residues); it reads NRQSSSSSAD. S17 is subject to Phosphoserine. A helical transmembrane segment spans residues 34 to 54; sequence ISVASIAAGIQFGWALQLSLL. At 55 to 68 the chain is on the extracellular side; the sequence is TPYVQLLGVPHKWS. The helical transmembrane segment at 69–89 threads the bilayer; that stretch reads SFIWLCGPVSGLLVQPSVGYF. Over 90–101 the chain is Cytoplasmic; sequence SDRCKSRFGRRR. A helical membrane pass occupies residues 102-122; it reads PFIAMGALLVAVAVVLIGYAA. The Extracellular portion of the chain corresponds to 123-139; the sequence is DFGHSMGDKVDEPVKMR. The chain crosses the membrane as a helical span at residues 140–160; sequence AVVIFALGFWILDVANNTLQG. Over 161–181 the chain is Cytoplasmic; sequence PCRAFLGDLAAGDAKKTRTAN. Residues 182–202 traverse the membrane as a helical segment; it reads AFFSFFMAVGNVLGYAAGSYT. Topologically, residues 203-224 are extracellular; sequence NLYKIFPFTMTKACDIYCANLK. Residues 225 to 245 form a helical membrane-spanning segment; it reads SCFFLSITLLLVVTIIALWYV. Over 246 to 277 the chain is Cytoplasmic; sequence EDKQWSPKADSDNEKTPFFGEIFGAFKVMKRP. Residues 278-298 form a helical membrane-spanning segment; it reads MWMLLIVTALNWIAWFPFLLY. Residues 299-324 lie on the Extracellular side of the membrane; sequence DTDWMGREVYGGDSKGDDKMKKLYNQ. Residues 325–345 traverse the membrane as a helical segment; it reads GIHVGGLGLMLNSIVLGFMSL. The Cytoplasmic segment spans residues 346–359; that stretch reads GIEGISRKMGGAKR. A helical transmembrane segment spans residues 360–380; sequence LWGAVNIILAVCLAMTVLVTK. The Extracellular segment spans residues 381-403; that stretch reads KAEEHRRIAGPMALPTDGIRAGA. A helical membrane pass occupies residues 404–424; sequence LTLFALLGIPLAITFSIPFAL. The Cytoplasmic portion of the chain corresponds to 425-446; it reads ASIISSSSGAGQGLSLGVLNMT. Residues 447–467 traverse the membrane as a helical segment; it reads IVIPQMVVSFGVGPIDALFGG. Residues 468 to 469 are Extracellular-facing; sequence GN. The chain crosses the membrane as a helical span at residues 470–490; sequence LPGFVVGAIAAAISSVVAFSV. Over 491-492 the chain is Cytoplasmic; sequence LP.

It belongs to the glycoside-pentoside-hexuronide (GPH) cation symporter transporter (TC 2.A.2.4) family.

It is found in the cell membrane. The protein operates within glycan biosynthesis; sucrose metabolism. Its function is as follows. May be responsible for the transport of glucosides into the cell, with the concomitant uptake of protons (symport system). Does not seem to transport sucrose. The protein is Putative sucrose transport protein SUC6 of Arabidopsis thaliana (Mouse-ear cress).